Here is a 317-residue protein sequence, read N- to C-terminus: Melanocyte-stimulating hormone receptor (317 aa).

Topologically, residues Met1–Glu37 are extracellular. Asn29 carries an N-linked (GlcNAc...) asparagine glycan. Residues Val38–Ile63 traverse the membrane as a helical segment. Topologically, residues Ala64–Pro72 are cytoplasmic. A helical membrane pass occupies residues Met73–Leu93. The Extracellular portion of the chain corresponds to Glu94 to Asn118. The helical transmembrane segment at Val119–Val140 threads the bilayer. The Cytoplasmic portion of the chain corresponds to Asp141–Arg163. A helical transmembrane segment spans residues Ala164–Tyr183. Residues Asp184–Cys191 lie on the Extracellular side of the membrane. A helical transmembrane segment spans residues Leu192–Leu211. The Cytoplasmic portion of the chain corresponds to Ala212–Ala240. The chain crosses the membrane as a helical span at residues Ala241–Leu266. At Cys267–Asn279 the chain is on the extracellular side. A helical transmembrane segment spans residues Phe280–Phe300. Residues Arg301 to Trp317 lie on the Cytoplasmic side of the membrane. A lipid anchor (S-palmitoyl cysteine) is attached at Cys315.

It belongs to the G-protein coupled receptor 1 family. As to quaternary structure, interacts with MGRN1, but does not undergo MGRN1-mediated ubiquitination; this interaction competes with GNAS-binding and thus inhibits agonist-induced cAMP production. Interacts with OPN3; the interaction results in a decrease in MC1R-mediated cAMP signaling and ultimately a decrease in melanin production in melanocytes.

The protein localises to the cell membrane. Receptor for MSH (alpha, beta and gamma) and ACTH. The activity of this receptor is mediated by G proteins which activate adenylate cyclase. Mediates melanogenesis, the production of eumelanin (black/brown) and phaeomelanin (red/yellow), via regulation of cAMP signaling in melanocytes. The sequence is that of Melanocyte-stimulating hormone receptor (MC1R) from Miopithecus talapoin (Angolan talapoin).